Consider the following 554-residue polypeptide: Glucose-6-phosphate isomerase (554 aa).

Glutamate 359 functions as the Proton donor in the catalytic mechanism. Active-site residues include histidine 390 and lysine 518.

The protein belongs to the GPI family.

It is found in the cytoplasm. The catalysed reaction is alpha-D-glucose 6-phosphate = beta-D-fructose 6-phosphate. The protein operates within carbohydrate biosynthesis; gluconeogenesis. It participates in carbohydrate degradation; glycolysis; D-glyceraldehyde 3-phosphate and glycerone phosphate from D-glucose: step 2/4. In terms of biological role, catalyzes the reversible isomerization of glucose-6-phosphate to fructose-6-phosphate. This is Glucose-6-phosphate isomerase from Pseudomonas putida (strain GB-1).